The primary structure comprises 456 residues: Argininosuccinate lyase (456 aa).

The protein belongs to the lyase 1 family. Argininosuccinate lyase subfamily.

Its subcellular location is the cytoplasm. It carries out the reaction 2-(N(omega)-L-arginino)succinate = fumarate + L-arginine. Its pathway is amino-acid biosynthesis; L-arginine biosynthesis; L-arginine from L-ornithine and carbamoyl phosphate: step 3/3. The chain is Argininosuccinate lyase from Listeria monocytogenes serotype 4b (strain CLIP80459).